Reading from the N-terminus, the 394-residue chain is Stearoyl-[acyl-carrier-protein] 9-desaturase 1, chloroplastic (394 aa).

Residues 1-37 constitute a chloroplast transit peptide; the sequence is MVMAMDRIALFSSSSSVYHHGSSHSHGSKSSRVFTIR. Positions 135, 173, 176, 226, 259, and 262 each coordinate Fe cation.

This sequence belongs to the fatty acid desaturase type 2 family. As to quaternary structure, homodimer. It depends on Fe(2+) as a cofactor. In terms of tissue distribution, ubiquitously expressed.

The protein resides in the plastid. Its subcellular location is the chloroplast. The enzyme catalyses octadecanoyl-[ACP] + 2 reduced [2Fe-2S]-[ferredoxin] + O2 + 2 H(+) = (9Z)-octadecenoyl-[ACP] + 2 oxidized [2Fe-2S]-[ferredoxin] + 2 H2O. It participates in lipid metabolism; fatty acid metabolism. Converts stearoyl-ACP to oleoyl-ACP by introduction of a cis double bond between carbons 9 and 10 of the acyl chain. This is Stearoyl-[acyl-carrier-protein] 9-desaturase 1, chloroplastic (S-ACP-DES1) from Arabidopsis thaliana (Mouse-ear cress).